An 86-amino-acid chain; its full sequence is Small ribosomal subunit protein bS20 (86 aa).

The protein belongs to the bacterial ribosomal protein bS20 family.

Functionally, binds directly to 16S ribosomal RNA. The polypeptide is Small ribosomal subunit protein bS20 (Arthrobacter sp. (strain FB24)).